A 269-amino-acid polypeptide reads, in one-letter code: MMTIYGVVGYPVEHSLSPVMHNAAFKALDMDCAYHKFEVKGEHLKDAILGARYLGFGGLNVTIPHKEAALRIMEPDRTALEIGAANTLDFKQMRAFNTDAAGAIDALRDGGVELENKGVLVLGAGGAARAVVYGLVKEGATVTIANRTTAKAADLAAYMRSFGSVFGTSLDSLGEKVRAVDIVINTTPIGMGWEDKPLVTRDMLDRSQAVFDLVYRPVETPLLREARAAGAKTIDGISMLARQGAKSFEIWTGVKPPVDVMERSARDAL.

Residues Ser15–Ser17 and Thr62 contribute to the shikimate site. Catalysis depends on Lys66, which acts as the Proton acceptor. The shikimate site is built by Asn86 and Asp99. NADP(+)-binding positions include Gly123–Ala127, Asn146–Lys151, and Leu213. Tyr215 provides a ligand contact to shikimate. Gly236 provides a ligand contact to NADP(+).

The protein belongs to the shikimate dehydrogenase family. In terms of assembly, homodimer.

It catalyses the reaction shikimate + NADP(+) = 3-dehydroshikimate + NADPH + H(+). It participates in metabolic intermediate biosynthesis; chorismate biosynthesis; chorismate from D-erythrose 4-phosphate and phosphoenolpyruvate: step 4/7. Functionally, involved in the biosynthesis of the chorismate, which leads to the biosynthesis of aromatic amino acids. Catalyzes the reversible NADPH linked reduction of 3-dehydroshikimate (DHSA) to yield shikimate (SA). The sequence is that of Shikimate dehydrogenase (NADP(+)) from Methanocella arvoryzae (strain DSM 22066 / NBRC 105507 / MRE50).